The chain runs to 437 residues: tRNA-2-methylthio-N(6)-dimethylallyladenosine synthase (437 aa).

Residues 1-115 enclose the MTTase N-terminal domain; that stretch reads MKVYIETMGC…ISQVIHKEKA (115 aa). [4Fe-4S] cluster contacts are provided by Cys10, Cys46, Cys78, Cys148, Cys152, and Cys155. One can recognise a Radical SAM core domain in the interval 134 to 367; it reads KKAQIRSLLN…QNRHKEILEE (234 aa). The 67-residue stretch at 370-436 folds into the TRAM domain; sequence KLEVGKTHVV…KGRLIAAIKG (67 aa).

It belongs to the methylthiotransferase family. MiaB subfamily. Monomer. The cofactor is [4Fe-4S] cluster.

The protein resides in the cytoplasm. The enzyme catalyses N(6)-dimethylallyladenosine(37) in tRNA + (sulfur carrier)-SH + AH2 + 2 S-adenosyl-L-methionine = 2-methylsulfanyl-N(6)-dimethylallyladenosine(37) in tRNA + (sulfur carrier)-H + 5'-deoxyadenosine + L-methionine + A + S-adenosyl-L-homocysteine + 2 H(+). In terms of biological role, catalyzes the methylthiolation of N6-(dimethylallyl)adenosine (i(6)A), leading to the formation of 2-methylthio-N6-(dimethylallyl)adenosine (ms(2)i(6)A) at position 37 in tRNAs that read codons beginning with uridine. The polypeptide is tRNA-2-methylthio-N(6)-dimethylallyladenosine synthase (Helicobacter pylori (strain HPAG1)).